The chain runs to 503 residues: MENQLWQNTLRCCEQYQESPQDAENILFLLLGLIILVNISINVATAMWQGLQNAIDKMIFWMNQKTEVVQVTECPPKEPQPANVQDVHIHCILDPVQVKMAQPTQCSSSSSHYFCKRSNDRRSRRRYGYQQGNLQIHQSSQQQGCLSHQQRLRNRPLSRGYPPFRKQPQGHKMSQMRPMPFFDMEDRDSLPEGHSCPHAKQPRRGWGSLCKPVRLASNVGLWGRQGGILASLPLPSLYLSPELRRLPKRVEAKSELRLQGFGPHYSQSRIWGTVEAEQWASSPPPPRRLLPNPSWVTVGYSSFPSGGHIPYDARDQWRRGTEGCEPPPAFVPRNPREVQGYRDHNSQAHRQNFSSHTHSQPNHSPPQSMGHVGYSSRESHEVRRRAPDWIEVFPSRHPLTTSTSLTALGEASYQRAPPASSGLMIPHSSQRLAEVQISDPTPPPTTFVPLSRNPGGNATYQVYDSLELKRQVQENRGRASSLPPPSTSASRPSLHRSRTGKLN.

A helical transmembrane segment spans residues 26-46 (ILFLLLGLIILVNISINVATA). Disordered regions lie at residues 155-176 (RPLS…MSQM), 311-381 (YDAR…ESHE), 436-456 (QISD…NPGG), and 472-503 (VQEN…GKLN). 2 stretches are compositionally biased toward basic and acidic residues: residues 311-322 (YDARDQWRRGTE) and 334-346 (NPRE…DHNS). Residues 348-367 (AHRQNFSSHTHSQPNHSPPQ) show a composition bias toward polar residues. Basic residues predominate over residues 493–503 (SLHRSRTGKLN).

The protein localises to the membrane. This is an uncharacterized protein from Mus musculus (Mouse).